The sequence spans 421 residues: Adenylosuccinate synthetase (421 aa).

GTP is bound by residues 11–17 (GDEGKGK) and 39–41 (GHT). D12 (proton acceptor) is an active-site residue. 2 residues coordinate Mg(2+): D12 and G39. IMP contacts are provided by residues 12 to 15 (DEGK), 37 to 40 (NAGH), T129, R143, N219, T234, and R298. The active-site Proton donor is H40. Residue 294 to 300 (VTTGRRR) participates in substrate binding. GTP contacts are provided by residues R300, 326–328 (KLD), and 409–411 (GTG).

This sequence belongs to the adenylosuccinate synthetase family. In terms of assembly, homodimer. The cofactor is Mg(2+).

Its subcellular location is the cytoplasm. The catalysed reaction is IMP + L-aspartate + GTP = N(6)-(1,2-dicarboxyethyl)-AMP + GDP + phosphate + 2 H(+). It functions in the pathway purine metabolism; AMP biosynthesis via de novo pathway; AMP from IMP: step 1/2. Functionally, plays an important role in the de novo pathway and in the salvage pathway of purine nucleotide biosynthesis. Catalyzes the first committed step in the biosynthesis of AMP from IMP. The protein is Adenylosuccinate synthetase of Paracoccidioides brasiliensis (strain Pb03).